The sequence spans 385 residues: GTP cyclohydrolase 1 type 2 homolog (385 aa).

The a divalent metal cation site is built by His-64, His-65, Asp-103, His-333, and Glu-337.

It belongs to the GTP cyclohydrolase I type 2/NIF3 family. In terms of assembly, homohexamer.

The chain is GTP cyclohydrolase 1 type 2 homolog from Mycobacterium leprae (strain TN).